The sequence spans 734 residues: 1,4-alpha-glucan branching enzyme GlgB (734 aa).

The active-site Nucleophile is the Asp-417. The Proton donor role is filled by Glu-470.

The protein belongs to the glycosyl hydrolase 13 family. GlgB subfamily. Monomer.

It catalyses the reaction Transfers a segment of a (1-&gt;4)-alpha-D-glucan chain to a primary hydroxy group in a similar glucan chain.. Its pathway is glycan biosynthesis; glycogen biosynthesis. In terms of biological role, catalyzes the formation of the alpha-1,6-glucosidic linkages in glycogen by scission of a 1,4-alpha-linked oligosaccharide from growing alpha-1,4-glucan chains and the subsequent attachment of the oligosaccharide to the alpha-1,6 position. This Rhizobium radiobacter (Agrobacterium tumefaciens) protein is 1,4-alpha-glucan branching enzyme GlgB (glgB).